Consider the following 140-residue polypeptide: uncharacterized protein (140 aa).

A coiled-coil region spans residues 27–65 (LLGEVSELELQKICFNRSLRNEINQLEEQNDISFVRVER).

This is an uncharacterized protein from Pasteurella multocida (strain Pm70).